Consider the following 150-residue polypeptide: Urease accessory protein UreE (150 aa).

Belongs to the UreE family.

It localises to the cytoplasm. Functionally, involved in urease metallocenter assembly. Binds nickel. Probably functions as a nickel donor during metallocenter assembly. The chain is Urease accessory protein UreE from Streptococcus vestibularis.